The sequence spans 61 residues: Sec-independent protein translocase protein TatA (61 aa).

The chain crosses the membrane as a helical span at residues 2–22 (GLSGISPLSLLLILAIIVALF).

It belongs to the TatA/E family. The Tat system comprises two distinct complexes: a TatABC complex, containing multiple copies of TatA, TatB and TatC subunits, and a separate TatA complex, containing only TatA subunits. Substrates initially bind to the TatABC complex, which probably triggers association of the separate TatA complex to form the active translocon.

The protein localises to the cell inner membrane. Functionally, part of the twin-arginine translocation (Tat) system that transports large folded proteins containing a characteristic twin-arginine motif in their signal peptide across membranes. TatA could form the protein-conducting channel of the Tat system. The polypeptide is Sec-independent protein translocase protein TatA (Legionella pneumophila (strain Paris)).